Here is a 290-residue protein sequence, read N- to C-terminus: Fructose-1,6-bisphosphatase class 1 (290 aa).

Mg(2+) is bound by residues E78, D96, L98, and D99. Substrate-binding positions include 99–102 (DGSS), Y201, and K226. E232 serves as a coordination point for Mg(2+).

It belongs to the FBPase class 1 family. Homotetramer. The cofactor is Mg(2+).

The protein resides in the cytoplasm. It catalyses the reaction beta-D-fructose 1,6-bisphosphate + H2O = beta-D-fructose 6-phosphate + phosphate. It functions in the pathway carbohydrate biosynthesis; gluconeogenesis. This Helicobacter pylori (strain G27) protein is Fructose-1,6-bisphosphatase class 1.